We begin with the raw amino-acid sequence, 370 residues long: DNA replication and repair protein RecF (370 aa).

Residue 30–37 (GENAQGKT) participates in ATP binding.

This sequence belongs to the RecF family.

The protein localises to the cytoplasm. Its function is as follows. The RecF protein is involved in DNA metabolism; it is required for DNA replication and normal SOS inducibility. RecF binds preferentially to single-stranded, linear DNA. It also seems to bind ATP. This is DNA replication and repair protein RecF from Staphylococcus aureus (strain USA300).